A 203-amino-acid polypeptide reads, in one-letter code: Small ribosomal subunit protein uS5 (203 aa).

In terms of domain architecture, S5 DRBM spans 51–114; sequence LEDEVLDITM…ENAKLNVVRI (64 aa).

This sequence belongs to the universal ribosomal protein uS5 family. In terms of assembly, part of the 30S ribosomal subunit. Contacts protein S4.

Its function is as follows. With S4 and S12 plays an important role in translational accuracy. In Methanothrix thermoacetophila (strain DSM 6194 / JCM 14653 / NBRC 101360 / PT) (Methanosaeta thermophila), this protein is Small ribosomal subunit protein uS5.